The chain runs to 223 residues: RNA-free ribonuclease P (223 aa).

Belongs to the HARP family.

It carries out the reaction Endonucleolytic cleavage of RNA, removing 5'-extranucleotides from tRNA precursor.. RNA-free RNase P that catalyzes the removal of the 5'-leader sequence from pre-tRNA to produce the mature 5'-terminus. The protein is RNA-free ribonuclease P of Methanococcus maripaludis (strain DSM 14266 / JCM 13030 / NBRC 101832 / S2 / LL).